The following is a 201-amino-acid chain: Recombination protein RecR (201 aa).

The C4-type zinc finger occupies 57 to 72 (CADCRTFTEQEHCTIC). The Toprim domain maps to 81-176 (GQICVVESPA…LASRIAHGVP (96 aa)).

This sequence belongs to the RecR family.

Its function is as follows. May play a role in DNA repair. It seems to be involved in an RecBC-independent recombinational process of DNA repair. It may act with RecF and RecO. The protein is Recombination protein RecR of Yersinia enterocolitica serotype O:8 / biotype 1B (strain NCTC 13174 / 8081).